Here is a 123-residue protein sequence, read N- to C-terminus: Small ribosomal subunit protein uS12 (123 aa).

3-methylthioaspartic acid is present on Asp89.

Belongs to the universal ribosomal protein uS12 family. In terms of assembly, part of the 30S ribosomal subunit. Contacts proteins S8 and S17. May interact with IF1 in the 30S initiation complex.

In terms of biological role, with S4 and S5 plays an important role in translational accuracy. Functionally, interacts with and stabilizes bases of the 16S rRNA that are involved in tRNA selection in the A site and with the mRNA backbone. Located at the interface of the 30S and 50S subunits, it traverses the body of the 30S subunit contacting proteins on the other side and probably holding the rRNA structure together. The combined cluster of proteins S8, S12 and S17 appears to hold together the shoulder and platform of the 30S subunit. The polypeptide is Small ribosomal subunit protein uS12 (Phenylobacterium zucineum (strain HLK1)).